The sequence spans 221 residues: Late protein I196L (221 aa).

A run of 3 repeats spans residues 28–48, 49–69, and 70–90. The 4; approximate repeat unit spans residues 91–112; that stretch reads SNYSMTAIPNNISDKEDYTYFS.

It belongs to the asfivirus I196L family.

This African swine fever virus (isolate Tick/Malawi/Lil 20-1/1983) (ASFV) protein is Late protein I196L.